The chain runs to 221 residues: GTP cyclohydrolase 1 (221 aa).

Zn(2+)-binding residues include C111, H114, and C182.

Belongs to the GTP cyclohydrolase I family. In terms of assembly, homomer.

The enzyme catalyses GTP + H2O = 7,8-dihydroneopterin 3'-triphosphate + formate + H(+). It functions in the pathway cofactor biosynthesis; 7,8-dihydroneopterin triphosphate biosynthesis; 7,8-dihydroneopterin triphosphate from GTP: step 1/1. This Erwinia tasmaniensis (strain DSM 17950 / CFBP 7177 / CIP 109463 / NCPPB 4357 / Et1/99) protein is GTP cyclohydrolase 1.